A 160-amino-acid polypeptide reads, in one-letter code: NADH-quinone oxidoreductase subunit B (160 aa).

[4Fe-4S] cluster-binding residues include C37, C38, C102, and C132.

The protein belongs to the complex I 20 kDa subunit family. NDH-1 is composed of 14 different subunits. Subunits NuoB, C, D, E, F, and G constitute the peripheral sector of the complex. The cofactor is [4Fe-4S] cluster.

Its subcellular location is the cell inner membrane. It catalyses the reaction a quinone + NADH + 5 H(+)(in) = a quinol + NAD(+) + 4 H(+)(out). In terms of biological role, NDH-1 shuttles electrons from NADH, via FMN and iron-sulfur (Fe-S) centers, to quinones in the respiratory chain. Couples the redox reaction to proton translocation (for every two electrons transferred, four hydrogen ions are translocated across the cytoplasmic membrane), and thus conserves the redox energy in a proton gradient. In Cupriavidus pinatubonensis (strain JMP 134 / LMG 1197) (Cupriavidus necator (strain JMP 134)), this protein is NADH-quinone oxidoreductase subunit B.